A 682-amino-acid polypeptide reads, in one-letter code: MTDAKYVLCRWGKRLWPAKVLARTETSAKNKKKKEFFLDVQILSLKEKIQVKSSAVEALQKSHIENIAAFLASQNEVPATPLEELTYRRSLRVALDVLNERTSLSPESHPIEDGITLSQKEKTDADVASQVSSAPSPSLLGEDGQAVVAQCASKRRSEYSSKSLLPSSALEDHLRCQVGPKTGLSESGAGDKSQDDSGLQLDHGQESTTKKRQRNLGEKPTRRRRSESGLSKGESVLKSQGQASSCVALASPRPPSQTRDEEPCAGVKGCDWVKSSGNIRPLSASERSRGCPTKRPRLDGGQNPPTRQLGTRTVGAAPCPRSCSGEVTMLCSAGAGDKPEEDPVSSEESTGFKSTHSLLEEEEEEEEEPPRILLYHEPRSFEVGMLVWLKYQKYPFWPAVVKSVRRRDKKASVLFIEGNMNPKGRGITVSLRRLKHFDCKEKHALLDRAKEDFAQAIGWCVSLITDYRVRLGCGSFAGSFLEYYAADISYPVRKSIQQDVLGTRFPQLGKGDPEEPVGDSQLGQWRPCRKVLPDRSRAARDRANQKLVEYIVKAKGAESHLRAILHSRKPSRWLKTFLSSSQCVTCMETYLEDEAQLDEVVEYLQGVCRDMDGQVPERGSGDRIRFILDVLLPEAIICAISAVEAVDYKTAEQKYIRGPTLSYREKEIFDNELLEERNRRRR.

S105 is modified (phosphoserine). The segment at 121 to 145 is disordered; that stretch reads EKTDADVASQVSSAPSPSLLGEDGQ. A compositionally biased stretch (low complexity) spans 127-140; it reads VASQVSSAPSPSLL. The residue at position 168 (S168) is a Phosphoserine. Disordered regions lie at residues 179–318 and 334–369; these read GPKT…GAAP and GAGD…EEEP. The segment covering 203–220 has biased composition (basic and acidic residues); the sequence is HGQESTTKKRQRNLGEKP. Phosphoserine is present on residues S345 and S346. Polar residues predominate over residues 346-357; sequence SEESTGFKSTHS. One can recognise a PWWP domain in the interval 383-444; the sequence is VGMLVWLKYQ…KHFDCKEKHA (62 aa).

It belongs to the PWWP3A family. In terms of assembly, interacts with TP53BP1 (via BRCT domain); the interaction is not dependent on its phosphorylation status. Binds nucleosomes. Interacts with trimethylated 'Lys-36' of histone H3 (H3K36me3) (in vitro).

Its subcellular location is the nucleus. Functionally, involved in the DNA damage response pathway by contributing to the maintenance of chromatin architecture. Recruited to the vicinity of DNA breaks by TP53BP1 and plays an accessory role to facilitate damage-induced chromatin changes and promoting chromatin relaxation. Required for efficient DNA repair and cell survival following DNA damage. This is PWWP domain-containing DNA repair factor 3A (Pwwp3a) from Mus musculus (Mouse).